The chain runs to 89 residues: UPF0297 protein lp_2275 (89 aa).

The protein belongs to the UPF0297 family.

The polypeptide is UPF0297 protein lp_2275 (Lactiplantibacillus plantarum (strain ATCC BAA-793 / NCIMB 8826 / WCFS1) (Lactobacillus plantarum)).